A 545-amino-acid chain; its full sequence is Sulfite oxidase, mitochondrial (545 aa).

Residues Met-1–Gln-79 constitute a mitochondrion transit peptide. The Cytochrome b5 heme-binding domain occupies Thr-82–Asn-161. His-118 contributes to the heme b binding site. At Ser-123 the chain carries Phosphoserine. The heme b site is built by His-143, Gln-145, and His-147. Residues Lys-165–Asp-174 form a hinge region. Residues Pro-175–Lys-401 are moco domain. Mo-molybdopterin contacts are provided by residues Phe-215–His-219, Cys-264, Asp-322, His-361, Arg-366, and His-377–Lys-379. The tract at residues Gly-402 to Arg-538 is homodimerization.

Homodimer. Heme b is required as a cofactor. It depends on Mo-molybdopterin as a cofactor.

The protein resides in the mitochondrion intermembrane space. It carries out the reaction sulfite + O2 + H2O = sulfate + H2O2. Its pathway is energy metabolism; sulfur metabolism. Its function is as follows. Catalyzes the oxidation of sulfite to sulfate, the terminal reaction in the oxidative degradation of sulfur-containing amino acids. The polypeptide is Sulfite oxidase, mitochondrial (SUOX) (Macaca fascicularis (Crab-eating macaque)).